A 1766-amino-acid polypeptide reads, in one-letter code: Putative ATP-dependent RNA helicase R366 (1766 aa).

Residues 209 to 239 (KSSSNQNSNQSNQESNESNQEPNESNQEINQ) are disordered. Residues 210 to 239 (SSSNQNSNQSNQESNESNQEPNESNQEINQ) show a composition bias toward low complexity. One can recognise a Helicase ATP-binding domain in the interval 656-865 (YHHYSNNRVL…RYYRRINDNR (210 aa)). 669 to 676 (GATGVGKS) is an ATP binding site. Residues 812 to 815 (DEAH) carry the DEAH box motif. The Helicase C-terminal domain occupies 947–1116 (DIHKSIKAIN…TMVKLIKSYP (170 aa)).

This sequence belongs to the DEAD box helicase family. DEAH subfamily.

It carries out the reaction ATP + H2O = ADP + phosphate + H(+). This chain is Putative ATP-dependent RNA helicase R366, found in Acanthamoeba polyphaga mimivirus (APMV).